The chain runs to 352 residues: MGCFGYLLLIIGLHQVLATYPIWWSLAVGQQYSSLGTQPIPCGTIPGLVAKQMRFCRNYMEIMPSVAEGVKIGIQECQHQFRGRRWNCTTVNDNLAIFGPVLDKATRESAFVHAIASAGVAFAVTRSCAEGSATICGCDTHHKGPPGEGWKWGGCSEDMDFGSMVSREFADARENRPDARSAMNRHNNEAGRTSILDHRHLKCKCHGLSGSCEVKTCWWSQPDFRVIGDYLKDKYDSASEMVVEKHRESRGWVETLRPKYTFFKPPIERDLIYYESSPNFCEPNPETGSFGTRDRECNVTSHGIDGCDLLCCGRGQNTRTEKRKEKCHCIFHWCCYVSCQECMRVYDVHTCK.

Positions Met-1–Ala-18 are cleaved as a signal peptide. Intrachain disulfides connect Cys-77–Cys-88, Cys-128–Cys-136, Cys-138–Cys-155, Cys-203–Cys-217, Cys-205–Cys-212, Cys-297–Cys-312, Cys-327–Cys-342, Cys-329–Cys-339, and Cys-334–Cys-335. Asn-87 carries N-linked (GlcNAc...) asparagine glycosylation. A lipid anchor (O-palmitoleoyl serine) is attached at Ser-209. The N-linked (GlcNAc...) asparagine glycan is linked to Asn-298.

This sequence belongs to the Wnt family. Disulfide bonds have critical and distinct roles in secretion and activity. Loss of each conserved cysteine results in high molecular weight oxidized Wnt oligomers, which are formed through inter-Wnt disulfide bonding. Post-translationally, palmitoleoylation is required for efficient binding to frizzled receptors. Depalmitoleoylation leads to Wnt signaling pathway inhibition. In terms of tissue distribution, at neurula in anterior neural fold; at tailbud in dorsal midline of midbrain.

It is found in the secreted. The protein resides in the extracellular space. Its subcellular location is the extracellular matrix. Ligand for members of the frizzled family of seven transmembrane receptors. Functions in the canonical Wnt signaling pathway that results in activation of transcription factors of the TCF/LEF family. Required for normal embryonic mesoderm development and formation of caudal somites. Required for normal morphogenesis of the developing neural tube. This is Protein Wnt-3a (wnt3a) from Xenopus laevis (African clawed frog).